We begin with the raw amino-acid sequence, 279 residues long: Bifunctional protein FolD (279 aa).

NADP(+) contacts are provided by residues 166-168 (GRS) and S191.

Belongs to the tetrahydrofolate dehydrogenase/cyclohydrolase family. Homodimer.

It catalyses the reaction (6R)-5,10-methylene-5,6,7,8-tetrahydrofolate + NADP(+) = (6R)-5,10-methenyltetrahydrofolate + NADPH. The enzyme catalyses (6R)-5,10-methenyltetrahydrofolate + H2O = (6R)-10-formyltetrahydrofolate + H(+). The protein operates within one-carbon metabolism; tetrahydrofolate interconversion. Catalyzes the oxidation of 5,10-methylenetetrahydrofolate to 5,10-methenyltetrahydrofolate and then the hydrolysis of 5,10-methenyltetrahydrofolate to 10-formyltetrahydrofolate. This chain is Bifunctional protein FolD, found in Shouchella clausii (strain KSM-K16) (Alkalihalobacillus clausii).